A 433-amino-acid chain; its full sequence is Evolutionarily conserved signaling intermediate in Toll pathway, mitochondrial (433 aa).

Residues 1–48 constitute a mitochondrion transit peptide; the sequence is MSWAQAILLARGASRGWGGICSTALTGAPFSQVPPQAPRGLRCSAAAH. Positions 36–63 are disordered; that stretch reads QAPRGLRCSAAAHNPDSSLVPHPPEPPR. Residue lysine 372 forms a Glycyl lysine isopeptide (Lys-Gly) (interchain with G-Cter in ubiquitin) linkage. A disordered region spans residues 397 to 433; that stretch reads SGELLPSSSELEEPPPPPPEGQEEEEDSQQRQQQGQS.

Belongs to the ECSIT family. Interacts with MAP3K1, SMAD4 and TRAF6. Interacts with SMAD1 only after BMP4-treatment. Part of the mitochondrial complex I assembly/MCIA complex that comprises at least the core subunits TMEM126B, NDUFAF1, ECSIT and ACAD9 and complement subunits such as COA1 and TMEM186. Interacts with NDUFAF1. Interacts with ACAD9. Interacts with TRIM59. Interacts with TMEM70 and TMEM242. Interacts (when ubiquitinated) with NF-kappa-B subunits RELA and NFKB1. Interacts with RIGI, IFIT1 and MAVS; these interactions promote RLR-mediated type I IFN induction. Interacts with SQSTM1; this interaction inhibits TLR4 signaling via functional regulation of the TRAF6-ECSIT complex. Interacts with cereblon/CRBN; this interaction inhibits the ubiquitination of ECSIT. In terms of processing, ubiquitinated on Lys-372; leading to translocation in the nucleus together with RELA and NFKB1 and expression of NF-kappa-B-dependent genes.

The protein resides in the cytoplasm. It is found in the nucleus. The protein localises to the mitochondrion. Its function is as follows. Adapter protein that plays a role in different signaling pathways including TLRs and IL-1 pathways or innate antiviral induction signaling. Plays a role in the activation of NF-kappa-B by forming a signal complex with TRAF6 and TAK1/MAP3K7 to activate TAK1/MAP3K7 leading to activation of IKKs. Once ubiquitinated, interacts with the dissociated RELA and NFKB1 proteins and translocates to the nucleus where it induces NF-kappa-B-dependent gene expression. Plays a role in innate antiviral immune response by bridging the pattern recognition receptors RIGI and MDA5/IFIT1 to the MAVS complex at the mitochondrion. Promotes proteolytic activation of MAP3K1. Involved in the BMP signaling pathway. Required for normal embryonic development. Functionally, as part of the MCIA complex, involved in the assembly of the mitochondrial complex I. This is Evolutionarily conserved signaling intermediate in Toll pathway, mitochondrial from Bos taurus (Bovine).